A 162-amino-acid polypeptide reads, in one-letter code: Onchocystatin (162 aa).

The first 32 residues, Met1–Ala32, serve as a signal peptide directing secretion. Positions Ala30 to Gly54 are disordered. The span at Ser36–Asp47 shows a compositional bias: basic and acidic residues. Residues Gln97–Gly101 carry the Secondary area of contact motif. Cys115 and Cys128 are oxidised to a cystine.

The protein belongs to the cystatin family. As to expression, expressed in the cuticle of L3 and L4 larvae, female adult, and in the eggshell of developing microfilariae.

Cysteine protease inhibitor which inhibits members of the peptidase C1 family. In the human host, inhibits CTSL/cathepsin L and CTSS/cathepsin S and to a lesser extent CTSB/cathepsin B which may cause defects in antigen processing and thereby impair antigen-driven T cell proliferation. The protein is Onchocystatin of Onchocerca volvulus.